A 134-amino-acid polypeptide reads, in one-letter code: UPF0299 membrane protein KPK_1586 (134 aa).

The next 4 helical transmembrane spans lie at 5–25, 26–46, 66–86, and 93–113; these read LTIIWQYLRAFVLIYACLYAG, IFIAGLLPITIPGSIIGMLIL, ILIRYMALLFVPIGVGVMQYW, and LGPVVISCAISTLVVFVVVSW.

The protein belongs to the UPF0299 family.

The protein localises to the cell inner membrane. The sequence is that of UPF0299 membrane protein KPK_1586 from Klebsiella pneumoniae (strain 342).